A 175-amino-acid polypeptide reads, in one-letter code: Sec-independent protein translocase protein TatB (175 aa).

Residues 1–21 traverse the membrane as a helical segment; the sequence is MLDLGLSKMALIGVVALVVLG. Residues 99–115 show a composition bias toward low complexity; the sequence is GDPAAADASGGLGATSD. A disordered region spans residues 99–118; that stretch reads GDPAAADASGGLGATSDEPS.

It belongs to the TatB family. In terms of assembly, the Tat system comprises two distinct complexes: a TatABC complex, containing multiple copies of TatA, TatB and TatC subunits, and a separate TatA complex, containing only TatA subunits. Substrates initially bind to the TatABC complex, which probably triggers association of the separate TatA complex to form the active translocon.

It localises to the cell inner membrane. In terms of biological role, part of the twin-arginine translocation (Tat) system that transports large folded proteins containing a characteristic twin-arginine motif in their signal peptide across membranes. Together with TatC, TatB is part of a receptor directly interacting with Tat signal peptides. TatB may form an oligomeric binding site that transiently accommodates folded Tat precursor proteins before their translocation. This chain is Sec-independent protein translocase protein TatB, found in Burkholderia thailandensis (strain ATCC 700388 / DSM 13276 / CCUG 48851 / CIP 106301 / E264).